The sequence spans 425 residues: UDP-N-acetylglucosamine 1-carboxyvinyltransferase (425 aa).

Residue 23–24 (KN) coordinates phosphoenolpyruvate. Arg100 is a binding site for UDP-N-acetyl-alpha-D-glucosamine. Residue Cys124 is the Proton donor of the active site. A 2-(S-cysteinyl)pyruvic acid O-phosphothioketal modification is found at Cys124. UDP-N-acetyl-alpha-D-glucosamine is bound by residues Asp313 and Ile335.

Belongs to the EPSP synthase family. MurA subfamily.

It localises to the cytoplasm. It carries out the reaction phosphoenolpyruvate + UDP-N-acetyl-alpha-D-glucosamine = UDP-N-acetyl-3-O-(1-carboxyvinyl)-alpha-D-glucosamine + phosphate. It functions in the pathway cell wall biogenesis; peptidoglycan biosynthesis. In terms of biological role, cell wall formation. Adds enolpyruvyl to UDP-N-acetylglucosamine. This chain is UDP-N-acetylglucosamine 1-carboxyvinyltransferase, found in Wolbachia pipientis wMel.